The sequence spans 373 residues: Probable peptidoglycan glycosyltransferase FtsW (373 aa).

9 consecutive transmembrane segments (helical) span residues L15–A35, F48–A68, A80–G100, F144–L164, D168–T188, Y192–D212, L278–V298, F311–V331, and L342–L362.

The protein belongs to the SEDS family. FtsW subfamily.

It localises to the cell inner membrane. The catalysed reaction is [GlcNAc-(1-&gt;4)-Mur2Ac(oyl-L-Ala-gamma-D-Glu-L-Lys-D-Ala-D-Ala)](n)-di-trans,octa-cis-undecaprenyl diphosphate + beta-D-GlcNAc-(1-&gt;4)-Mur2Ac(oyl-L-Ala-gamma-D-Glu-L-Lys-D-Ala-D-Ala)-di-trans,octa-cis-undecaprenyl diphosphate = [GlcNAc-(1-&gt;4)-Mur2Ac(oyl-L-Ala-gamma-D-Glu-L-Lys-D-Ala-D-Ala)](n+1)-di-trans,octa-cis-undecaprenyl diphosphate + di-trans,octa-cis-undecaprenyl diphosphate + H(+). It participates in cell wall biogenesis; peptidoglycan biosynthesis. Peptidoglycan polymerase that is essential for cell division. The sequence is that of Probable peptidoglycan glycosyltransferase FtsW from Geobacter sulfurreducens (strain DL-1 / KN400).